We begin with the raw amino-acid sequence, 494 residues long: Tripartite motif-containing protein 5 (494 aa).

A2 bears the N-acetylalanine mark. Residues 15 to 59 (CPICLELLTQPLSLDCGHSFCQACLTANHKTSMPDEGERSCPVCR) form an RING-type zinc finger. Position 86 is a phosphoserine (S86). A B box-type zinc finger spans residues 91-133 (QKVDHCARHGEKLLLFCREDRKVICWLCERSQEHRGHHTFLTE). Residues C96, H99, C118, and H124 each contribute to the Zn(2+) site. Residues 132 to 241 (TEEVAQEYQV…LISDLEHRLQ (110 aa)) are a coiled coil. Residues 186-199 (FEQLRHILDWVESN) are required for interaction with GABARAP and for autophagy. Positions 282-494 (LKVMLKKLRE…VPMTLCSPSS (213 aa)) constitute a B30.2/SPRY domain.

It belongs to the TRIM/RBCC family. As to quaternary structure, can form homodimers and homotrimers. In addition to lower-order dimerization, also exhibits a higher-order multimerization and both low- and high-order multimerizations are essential for its restriction activity. Interacts with BTBD1 and BTBD2. Interacts with PSMC4, PSMC5, PSMD7 and HSPA8/HSC70. Interacts (via B30.2/SPRY domain) with HSPA1A/B. Interacts with PSMC2, MAP3K7/TAK1, TAB2 and TAB3. Interacts with SQSTM1. Interacts with TRIM6 and TRIM34. Interacts with ULK1 (phosphorylated form), GABARAP, GABARAPL1, GABARAPL2, MAP1LC3A, MAP1LC3C and BECN1. In terms of processing, degraded in a proteasome-independent fashion in the absence of viral infection but in a proteasome-dependent fashion following exposure to restriction sensitive virus. Autoubiquitinated in a RING finger- and UBE2D2-dependent manner. Monoubiquitinated by TRIM21. Deubiquitinated by Yersinia YopJ. Ubiquitination may not lead to proteasomal degradation.

The protein localises to the cytoplasm. It is found in the nucleus. The enzyme catalyses S-ubiquitinyl-[E2 ubiquitin-conjugating enzyme]-L-cysteine + [acceptor protein]-L-lysine = [E2 ubiquitin-conjugating enzyme]-L-cysteine + N(6)-ubiquitinyl-[acceptor protein]-L-lysine.. Its pathway is protein modification; protein ubiquitination. Functionally, capsid-specific restriction factor that prevents infection from non-host-adapted retroviruses. Blocks viral replication early in the life cycle, after viral entry but before reverse transcription. In addition to acting as a capsid-specific restriction factor, also acts as a pattern recognition receptor that activates innate immune signaling in response to the retroviral capsid lattice. Binding to the viral capsid triggers its E3 ubiquitin ligase activity, and in concert with the heterodimeric ubiquitin conjugating enzyme complex UBE2V1-UBE2N (also known as UBC13-UEV1A complex) generates 'Lys-63'-linked polyubiquitin chains, which in turn are catalysts in the autophosphorylation of the MAP3K7/TAK1 complex (includes TAK1, TAB2, and TAB3). Activation of the MAP3K7/TAK1 complex by autophosphorylation results in the induction and expression of NF-kappa-B and MAPK-responsive inflammatory genes, thereby leading to an innate immune response in the infected cell. Plays a role in regulating autophagy through activation of autophagy regulator BECN1 by causing its dissociation from its inhibitors BCL2 and TAB2. The sequence is that of Tripartite motif-containing protein 5 (TRIM5) from Nomascus leucogenys (Northern white-cheeked gibbon).